The following is a 218-amino-acid chain: uncharacterized protein (218 aa).

Residues 1–21 (MKKFVYKYSFGALLLLSGLSS) form the signal peptide. Residue Cys-22 is the site of N-palmitoyl cysteine attachment. A lipid anchor (S-diacylglycerol cysteine) is attached at Cys-22.

This sequence belongs to the chlamydial CPn_0875/CT_734/TC_0107 family.

The protein localises to the cell membrane. This is an uncharacterized protein from Chlamydia muridarum (strain MoPn / Nigg).